The following is a 94-amino-acid chain: Small ribosomal subunit protein bS18c (94 aa).

It belongs to the bacterial ribosomal protein bS18 family. In terms of assembly, part of the 30S ribosomal subunit.

The protein resides in the plastid. Its subcellular location is the chloroplast. The sequence is that of Small ribosomal subunit protein bS18c from Manihot esculenta (Cassava).